The following is a 93-amino-acid chain: FMRFamide-like neuropeptides 22 (93 aa).

The first 19 residues, 1 to 19 (MNRSMIALCVVLMVSLVSA), serve as a signal peptide directing secretion. Positions 20–46 (QVFDLDGQQLAGLEQNDARLMEQQVKR) are excised as a propeptide. 3 positions are modified to phenylalanine amide: F55, F67, and F79. A propeptide spanning residues 83–93 (SGAEAVSEQDY) is cleaved from the precursor.

It belongs to the FARP (FMRFamide related peptide) family.

It localises to the secreted. In terms of biological role, FMRFamides and FMRFamide-like peptides are neuropeptides. SPSAKWMRF-amide: Acts as a ligand for the npr-22 receptor in vitro. The protein is FMRFamide-like neuropeptides 22 of Caenorhabditis elegans.